Here is a 216-residue protein sequence, read N- to C-terminus: Cytidylate kinase (216 aa).

7 to 15 (GPSGTGKST) serves as a coordination point for ATP.

The protein belongs to the cytidylate kinase family. Type 1 subfamily.

It localises to the cytoplasm. The enzyme catalyses CMP + ATP = CDP + ADP. It catalyses the reaction dCMP + ATP = dCDP + ADP. The protein is Cytidylate kinase of Chlamydia trachomatis serovar D (strain ATCC VR-885 / DSM 19411 / UW-3/Cx).